Consider the following 262-residue polypeptide: Type III pantothenate kinase (262 aa).

6–13 (DVGNTNTV) provides a ligand contact to ATP. Residues Tyr101 and 108–111 (GADR) each bind substrate. Catalysis depends on Asp110, which acts as the Proton acceptor. K(+) is bound at residue Asp130. Residue Thr133 coordinates ATP. Thr186 lines the substrate pocket.

It belongs to the type III pantothenate kinase family. As to quaternary structure, homodimer. NH4(+) serves as cofactor. The cofactor is K(+).

It is found in the cytoplasm. It carries out the reaction (R)-pantothenate + ATP = (R)-4'-phosphopantothenate + ADP + H(+). Its pathway is cofactor biosynthesis; coenzyme A biosynthesis; CoA from (R)-pantothenate: step 1/5. In terms of biological role, catalyzes the phosphorylation of pantothenate (Pan), the first step in CoA biosynthesis. In Desulforapulum autotrophicum (strain ATCC 43914 / DSM 3382 / VKM B-1955 / HRM2) (Desulfobacterium autotrophicum), this protein is Type III pantothenate kinase.